Consider the following 678-residue polypeptide: Penicillin-binding protein activator LpoA (678 aa).

The signal sequence occupies residues 1–26 (MVPSTFSRLKAARCLPVVLAALIFAG). Residue Cys-27 is the site of N-palmitoyl cysteine attachment. Cys-27 carries S-diacylglycerol cysteine lipidation. Composition is skewed to low complexity over residues 300–310 (AADVAEQPQPQ), 330–340 (QPAAQPVPVSA), and 513–528 (TTNNPTLQTTPTDDQF). Disordered stretches follow at residues 300 to 340 (AADV…PVSA) and 496 to 528 (ALTGSPITPRATTDSGMTTNNPTLQTTPTDDQF).

Belongs to the LpoA family. Interacts with PBP1a.

It is found in the cell outer membrane. Its function is as follows. Regulator of peptidoglycan synthesis that is essential for the function of penicillin-binding protein 1A (PBP1a). This Shigella flexneri serotype 5b (strain 8401) protein is Penicillin-binding protein activator LpoA.